The sequence spans 598 residues: Elongation factor 4 (598 aa).

Residues 2–184 (NRIRNFSIIA…TIVAKLPPPK (183 aa)) form the tr-type G domain. Residues 14-19 (DHGKST) and 131-134 (NKID) each bind GTP.

This sequence belongs to the TRAFAC class translation factor GTPase superfamily. Classic translation factor GTPase family. LepA subfamily.

It is found in the cell inner membrane. The enzyme catalyses GTP + H2O = GDP + phosphate + H(+). In terms of biological role, required for accurate and efficient protein synthesis under certain stress conditions. May act as a fidelity factor of the translation reaction, by catalyzing a one-codon backward translocation of tRNAs on improperly translocated ribosomes. Back-translocation proceeds from a post-translocation (POST) complex to a pre-translocation (PRE) complex, thus giving elongation factor G a second chance to translocate the tRNAs correctly. Binds to ribosomes in a GTP-dependent manner. This Desulfosudis oleivorans (strain DSM 6200 / JCM 39069 / Hxd3) (Desulfococcus oleovorans) protein is Elongation factor 4.